A 2179-amino-acid chain; its full sequence is FRAS1-related extracellular matrix protein 1 (2179 aa).

A signal peptide spans 1–21 (MNSLSWGAANAVLLLLLLAWA). The Cell attachment site signature appears at 199-201 (RGD). CSPG repeat units lie at residues 296-390 (KAAF…LEVY), 413-500 (APRV…FRIF), and 521-615 (PPFL…FVLW). N-linked (GlcNAc...) asparagine glycosylation occurs at N335. Residues N560 and N622 are each glycosylated (N-linked (GlcNAc...) asparagine). CSPG repeat units lie at residues 642–754 (KEAP…FSVS), 776–867 (QVPE…LEVT), and 887–982 (EPPV…LVVS). N1014 carries an N-linked (GlcNAc...) asparagine glycan. CSPG repeat units lie at residues 1024-1126 (PPSI…VYVT), 1147-1254 (EAPD…IQLS), 1275-1372 (KPML…FYLW), 1393-1485 (GDIV…FIIS), 1506-1596 (LPVV…FMAT), and 1628-1724 (PRIT…FQIM). A glycan (N-linked (GlcNAc...) asparagine) is linked at N1566. Residues 1731 to 1830 (ATPQILELKW…DDEVFEVILN (100 aa)) form the Calx-beta domain. Residues 1907-1909 (RGD) carry the Cell attachment site motif. In terms of domain architecture, C-type lectin spans 2060–2174 (HSGYCHILIT…CRRAKPHNYV (115 aa)). C2151 and C2165 are oxidised to a cystine.

The protein belongs to the FRAS1 family. As to quaternary structure, interacts with FREM2.

It is found in the secreted. The protein localises to the extracellular space. The protein resides in the extracellular matrix. It localises to the basement membrane. Its function is as follows. Extracellular matrix protein that plays a role in epidermal differentiation and is required for epidermal adhesion during embryonic development. This chain is FRAS1-related extracellular matrix protein 1, found in Homo sapiens (Human).